A 476-amino-acid chain; its full sequence is Argininosuccinate lyase (476 aa).

It belongs to the lyase 1 family. Argininosuccinate lyase subfamily.

It localises to the cytoplasm. It carries out the reaction 2-(N(omega)-L-arginino)succinate = fumarate + L-arginine. It functions in the pathway amino-acid biosynthesis; L-arginine biosynthesis; L-arginine from L-ornithine and carbamoyl phosphate: step 3/3. The sequence is that of Argininosuccinate lyase from Thermobifida fusca (strain YX).